Here is a 335-residue protein sequence, read N- to C-terminus: Trans-3-hydroxy-L-proline dehydratase (335 aa).

The Proton acceptor role is filled by Cys-91. Substrate contacts are provided by residues Gly-92–His-93 and Gly-256–Ser-257.

The protein belongs to the proline racemase family. As to quaternary structure, homodimer.

The enzyme catalyses trans-3-hydroxy-L-proline = 1-pyrroline-2-carboxylate + H2O. It functions in the pathway amino-acid degradation. Its function is as follows. Catalyzes the dehydration of trans-3-hydroxy-L-proline (t3LHyp) to Delta(1)-pyrroline-2-carboxylate (Pyr2C). Together with LhpI, is involved in a t3LHyp degradation pathway to L-proline, which allows A.brasilense to grow on t3LHyp as a sole carbon source. In Azospirillum brasilense, this protein is Trans-3-hydroxy-L-proline dehydratase.